We begin with the raw amino-acid sequence, 302 residues long: Protein FdhE homolog (302 aa).

It belongs to the FdhE family.

It localises to the cytoplasm. In terms of biological role, necessary for formate dehydrogenase activity. This chain is Protein FdhE homolog, found in Shewanella sp. (strain MR-4).